We begin with the raw amino-acid sequence, 571 residues long: UvrABC system protein C (571 aa).

Positions 15-93 (TSPGVYLWKD…VDRFNPEFNI (79 aa)) constitute a GIY-YIG domain. The UVR domain occupies 184-219 (NNYLNELTNKMHTAANNMQFELALFLRDGLTYLKKL).

This sequence belongs to the UvrC family. Interacts with UvrB in an incision complex.

The protein resides in the cytoplasm. In terms of biological role, the UvrABC repair system catalyzes the recognition and processing of DNA lesions. UvrC both incises the 5' and 3' sides of the lesion. The N-terminal half is responsible for the 3' incision and the C-terminal half is responsible for the 5' incision. The sequence is that of UvrABC system protein C from Mycoplasmopsis agalactiae (strain NCTC 10123 / CIP 59.7 / PG2) (Mycoplasma agalactiae).